We begin with the raw amino-acid sequence, 125 residues long: Small ribosomal subunit protein uS12 (125 aa).

The segment at 1–24 is disordered; sequence MPTISQLVRKPRKAKRTKSKVPAL. Residues 9–19 show a composition bias toward basic residues; that stretch reads RKPRKAKRTKS. Residue Asp89 is modified to 3-methylthioaspartic acid. Positions 101-125 are disordered; the sequence is SLDTAGVKDRKQARSKYGSKRPKSA. Over residues 113 to 125 the composition is skewed to basic residues; the sequence is ARSKYGSKRPKSA.

This sequence belongs to the universal ribosomal protein uS12 family. As to quaternary structure, part of the 30S ribosomal subunit. Contacts proteins S8 and S17. May interact with IF1 in the 30S initiation complex.

In terms of biological role, with S4 and S5 plays an important role in translational accuracy. Interacts with and stabilizes bases of the 16S rRNA that are involved in tRNA selection in the A site and with the mRNA backbone. Located at the interface of the 30S and 50S subunits, it traverses the body of the 30S subunit contacting proteins on the other side and probably holding the rRNA structure together. The combined cluster of proteins S8, S12 and S17 appears to hold together the shoulder and platform of the 30S subunit. This Nitrosomonas europaea (strain ATCC 19718 / CIP 103999 / KCTC 2705 / NBRC 14298) protein is Small ribosomal subunit protein uS12.